A 240-amino-acid polypeptide reads, in one-letter code: Probable transcriptional regulator ycf27 (240 aa).

Positions 5 to 118 (KILVIDDEAS…ELEARIRSVL (114 aa)) constitute a Response regulatory domain. Asp54 carries the 4-aspartylphosphate modification. The segment at residues 74 to 92 (DVPIIMLTALSDVSDRITG) is a DNA-binding region (H-T-H motif). A DNA-binding region (ompR/PhoB-type) is located at residues 133 to 234 (SGIINIGFLK…ARGTGYLFQR (102 aa)).

It is found in the plastid. The protein resides in the chloroplast. Probable promoter-specific protein mediating the interaction between DNA and RNA polymerase. The polypeptide is Probable transcriptional regulator ycf27 (ycf27) (Porphyridium aerugineum (Red microalga)).